A 396-amino-acid chain; its full sequence is Ribosomal RNA large subunit methyltransferase I (396 aa).

The PUA domain maps to 2–79; the sequence is SIRIKLKPGR…KEEAIDRDFF (78 aa).

This sequence belongs to the methyltransferase superfamily. RlmI family.

It localises to the cytoplasm. The enzyme catalyses cytidine(1962) in 23S rRNA + S-adenosyl-L-methionine = 5-methylcytidine(1962) in 23S rRNA + S-adenosyl-L-homocysteine + H(+). Its function is as follows. Specifically methylates the cytosine at position 1962 (m5C1962) of 23S rRNA. This Shewanella amazonensis (strain ATCC BAA-1098 / SB2B) protein is Ribosomal RNA large subunit methyltransferase I.